A 391-amino-acid polypeptide reads, in one-letter code: Transaldolase (391 aa).

The segment at 1–329 (MGKNLLEQLR…RLKVLDGQEH (329 aa)) is transaldolase. Lysine 136 serves as the catalytic Schiff-base intermediate with substrate. 2 EF-hand domains span residues 329–364 (HIKH…FDAL) and 365–387 (DRDH…AFRL). Positions 342, 344, 346, 353, 365, 367, 369, 371, and 376 each coordinate Ca(2+).

It belongs to the transaldolase family. Type 1 subfamily.

The protein resides in the cytoplasm. The enzyme catalyses D-sedoheptulose 7-phosphate + D-glyceraldehyde 3-phosphate = D-erythrose 4-phosphate + beta-D-fructose 6-phosphate. It participates in carbohydrate degradation; pentose phosphate pathway; D-glyceraldehyde 3-phosphate and beta-D-fructose 6-phosphate from D-ribose 5-phosphate and D-xylulose 5-phosphate (non-oxidative stage): step 2/3. In terms of biological role, transaldolase is important for the balance of metabolites in the pentose-phosphate pathway. The sequence is that of Transaldolase from Synechocystis sp. (strain ATCC 27184 / PCC 6803 / Kazusa).